The chain runs to 106 residues: Small ribosomal subunit protein uS10 (106 aa).

This sequence belongs to the universal ribosomal protein uS10 family. As to quaternary structure, part of the 30S ribosomal subunit.

Functionally, involved in the binding of tRNA to the ribosomes. The protein is Small ribosomal subunit protein uS10 of Synechococcus sp. (strain CC9311).